The following is a 515-amino-acid chain: Glucose-6-phosphate 1-dehydrogenase 6, cytoplasmic (515 aa).

Residues 38 to 45 (GASGDLAK), Arg-73, Tyr-155, and Lys-182 contribute to the NADP(+) site. Residues Lys-182, 212 to 216 (HYLGK), Glu-250, and Asp-269 each bind D-glucose 6-phosphate. The Proton acceptor role is filled by His-274. Lys-357 serves as a coordination point for NADP(+). D-glucose 6-phosphate is bound by residues Lys-360 and Arg-365. Residues Lys-366, Arg-370, and Arg-394 each coordinate NADP(+). Residue Gln-396 participates in D-glucose 6-phosphate binding. Residues 402-404 (YMK), 422-424 (DLS), Arg-488, and Trp-510 contribute to the NADP(+) site.

This sequence belongs to the glucose-6-phosphate dehydrogenase family. As to quaternary structure, forms homodimer. Expressed in roots, leaves, stems, buds, flowers and siliques.

It is found in the cytoplasm. The protein resides in the cytosol. The catalysed reaction is D-glucose 6-phosphate + NADP(+) = 6-phospho-D-glucono-1,5-lactone + NADPH + H(+). Its pathway is carbohydrate degradation; pentose phosphate pathway; D-ribulose 5-phosphate from D-glucose 6-phosphate (oxidative stage): step 1/3. Regulated by metabolites. In terms of biological role, catalyzes the rate-limiting step of the oxidative pentose-phosphate pathway, which represents a route for the dissimilation of carbohydrates besides glycolysis. The main function of this enzyme is to provide reducing power (NADPH) and pentose phosphates for fatty acid and nucleic acid synthesis which are involved in membrane synthesis and cell division. The polypeptide is Glucose-6-phosphate 1-dehydrogenase 6, cytoplasmic (Arabidopsis thaliana (Mouse-ear cress)).